Here is a 914-residue protein sequence, read N- to C-terminus: DNA mismatch repair protein MutS (914 aa).

The segment at 1–24 is disordered; it reads MDNKTDNKNNLTPQSAPSSAPHKE. Polar residues predominate over residues 8–18; it reads KNNLTPQSAPS. 662–669 is an ATP binding site; sequence GPNMGGKS.

It belongs to the DNA mismatch repair MutS family.

Functionally, this protein is involved in the repair of mismatches in DNA. It is possible that it carries out the mismatch recognition step. This protein has a weak ATPase activity. This Bartonella henselae (strain ATCC 49882 / DSM 28221 / CCUG 30454 / Houston 1) (Rochalimaea henselae) protein is DNA mismatch repair protein MutS.